A 506-amino-acid polypeptide reads, in one-letter code: Probable UTP--glucose-1-phosphate uridylyltransferase (506 aa).

2 positions are modified to phosphoserine: S15 and S17. Residues 115 to 118 (LNGG), K129, Q192, and G221 contribute to the UTP site. Residue 117–118 (GG) coordinates substrate. K129 contributes to the Mg(2+) binding site. Substrate is bound by residues H222 and 250 to 252 (NID). Positions 252 and 394 each coordinate UTP. A Mg(2+)-binding site is contributed by D252. The active site involves K394. The segment at 455–506 (HLTITGDVNIGRNVTLKGTVIIVASDANRIDIPNGSVLENCVITGNLNILEH) is oligomerization.

Belongs to the UDPGP type 1 family. As to quaternary structure, homooctamer.

Its subcellular location is the cytoplasm. It is found in the nucleus. The catalysed reaction is alpha-D-glucose 1-phosphate + UTP + H(+) = UDP-alpha-D-glucose + diphosphate. Plays a central role as a glucosyl donor in cellular metabolic pathways. This is Probable UTP--glucose-1-phosphate uridylyltransferase (fyu1) from Schizosaccharomyces pombe (strain 972 / ATCC 24843) (Fission yeast).